The primary structure comprises 383 residues: Chaperone protein DnaJ (383 aa).

The J domain occupies 5-70 (DYYEVLGVAK…EKRAAYDRFG (66 aa)). The CR-type zinc finger occupies 139–217 (GKTETIRIPT…CSGAGRVNRE (79 aa)). Cysteine 152, cysteine 155, cysteine 169, cysteine 172, cysteine 191, cysteine 194, cysteine 205, and cysteine 208 together coordinate Zn(2+). 4 CXXCXGXG motif repeats span residues 152 to 159 (CEACSGTG), 169 to 176 (CSTCGGYG), 191 to 198 (CPNCHGRG), and 205 to 212 (CTACSGAG).

The protein belongs to the DnaJ family. Homodimer. Requires Zn(2+) as cofactor.

The protein resides in the cytoplasm. In terms of biological role, participates actively in the response to hyperosmotic and heat shock by preventing the aggregation of stress-denatured proteins and by disaggregating proteins, also in an autonomous, DnaK-independent fashion. Unfolded proteins bind initially to DnaJ; upon interaction with the DnaJ-bound protein, DnaK hydrolyzes its bound ATP, resulting in the formation of a stable complex. GrpE releases ADP from DnaK; ATP binding to DnaK triggers the release of the substrate protein, thus completing the reaction cycle. Several rounds of ATP-dependent interactions between DnaJ, DnaK and GrpE are required for fully efficient folding. Also involved, together with DnaK and GrpE, in the DNA replication of plasmids through activation of initiation proteins. This chain is Chaperone protein DnaJ, found in Methylorubrum populi (strain ATCC BAA-705 / NCIMB 13946 / BJ001) (Methylobacterium populi).